Consider the following 222-residue polypeptide: 7-cyano-7-deazaguanine synthase (222 aa).

8 to 18 lines the ATP pocket; sequence LSGGMDSTTLA. Zn(2+)-binding residues include Cys-188, Cys-196, Cys-199, and Cys-202.

The protein belongs to the QueC family. It depends on Zn(2+) as a cofactor.

It carries out the reaction 7-carboxy-7-deazaguanine + NH4(+) + ATP = 7-cyano-7-deazaguanine + ADP + phosphate + H2O + H(+). Its pathway is purine metabolism; 7-cyano-7-deazaguanine biosynthesis. In terms of biological role, catalyzes the ATP-dependent conversion of 7-carboxy-7-deazaguanine (CDG) to 7-cyano-7-deazaguanine (preQ(0)). The chain is 7-cyano-7-deazaguanine synthase from Methanoculleus marisnigri (strain ATCC 35101 / DSM 1498 / JR1).